The primary structure comprises 247 residues: Small ribosomal subunit protein uS2 (247 aa).

Belongs to the universal ribosomal protein uS2 family.

This Cupriavidus metallidurans (strain ATCC 43123 / DSM 2839 / NBRC 102507 / CH34) (Ralstonia metallidurans) protein is Small ribosomal subunit protein uS2.